The primary structure comprises 314 residues: Pectin lyase (314 aa).

Arginine 202 is a catalytic residue.

This sequence belongs to the polysaccharide lyase 1 family.

The catalysed reaction is Eliminative cleavage of (1-&gt;4)-alpha-D-galacturonan methyl ester to give oligosaccharides with 4-deoxy-6-O-methyl-alpha-D-galact-4-enuronosyl groups at their non-reducing ends.. This Pectobacterium carotovorum (Erwinia carotovora) protein is Pectin lyase (pnl).